Here is a 305-residue protein sequence, read N- to C-terminus: Homoserine O-acetyltransferase (305 aa).

Cys142 functions as the Acyl-thioester intermediate in the catalytic mechanism. Substrate-binding residues include Lys163 and Ser192. Catalysis depends on His235, which acts as the Proton acceptor. The active site involves Glu237. Arg249 contacts substrate.

Belongs to the MetA family.

The protein localises to the cytoplasm. The catalysed reaction is L-homoserine + acetyl-CoA = O-acetyl-L-homoserine + CoA. It functions in the pathway amino-acid biosynthesis; L-methionine biosynthesis via de novo pathway; O-acetyl-L-homoserine from L-homoserine: step 1/1. Functionally, transfers an acetyl group from acetyl-CoA to L-homoserine, forming acetyl-L-homoserine. This Cereibacter sphaeroides (strain ATCC 17025 / ATH 2.4.3) (Rhodobacter sphaeroides) protein is Homoserine O-acetyltransferase.